Here is a 463-residue protein sequence, read N- to C-terminus: Metacaspase-1 (463 aa).

The disordered stretch occupies residues 1-149; that stretch reads MSWNQYPGGG…PQLQGQGGQS (149 aa). Over residues 7 to 18 the composition is skewed to gly residues; the sequence is PGGGHHQQGGYG. Residues 20–56 are compositionally biased toward pro residues; that stretch reads RPPPPQWAQQGPPPPPNMGYRPPPPPQAYYNNPPPPQ. Residues 57-83 are compositionally biased toward low complexity; the sequence is QYQRPAPQQNGYQQGGYQQQQQSQGNY. Active-site residues include His-247 and Cys-309.

It belongs to the peptidase C14B family.

In terms of biological role, involved in cell death (apoptosis). The chain is Metacaspase-1 (MCA1) from Cryptococcus neoformans var. neoformans serotype D (strain B-3501A) (Filobasidiella neoformans).